The primary structure comprises 88 residues: MDGLTAAESRELDQRLQKRQVKEFMSVFGNLVDNCFTACVDDFTSKALSGRESGCISRCVLKSMSTQTRLGERFGELNAAMTAEMQRR.

The Twin CX3C motif signature appears at 35 to 59 (CFTACVDDFTSKALSGRESGCISRC). Cystine bridges form between C35–C59 and C39–C55.

The protein belongs to the small Tim family. In terms of assembly, heterohexamer; composed of 3 copies of tim9 and 3 copies of tim10, named soluble 70 kDa complex. Associates with the tim22 complex, whose core is composed of tim22 and tim54. Interacts with the transmembrane regions of multi-pass transmembrane proteins in transit.

Its subcellular location is the mitochondrion inner membrane. Functionally, mitochondrial intermembrane chaperone that participates in the import and insertion of multi-pass transmembrane proteins into the mitochondrial inner membrane. Also required for the transfer of beta-barrel precursors from the TOM complex to the sorting and assembly machinery (SAM complex) of the outer membrane. Acts as a chaperone-like protein that protects the hydrophobic precursors from aggregation and guide them through the mitochondrial intermembrane space. This Neurospora crassa (strain ATCC 24698 / 74-OR23-1A / CBS 708.71 / DSM 1257 / FGSC 987) protein is Mitochondrial import inner membrane translocase subunit tim9 (tim9).